The chain runs to 718 residues: Polyribonucleotide nucleotidyltransferase (718 aa).

Positions 496 and 502 each coordinate Mg(2+). Residues 563-622 form the KH domain; the sequence is PRLLTIKIDPDMIGLVIGPGGKTIKGITEETGAKIDIEDDGTVTISAVDENKAKRARNIV. One can recognise an S1 motif domain in the interval 632-700; the sequence is GDVYAGRVTR…NKGRINLTRL (69 aa).

As to quaternary structure, may form homodimers or higher order multimers. Interacts with RNase E (rne). Mg(2+) is required as a cofactor.

The protein localises to the cytoplasm. The enzyme catalyses RNA(n+1) + phosphate = RNA(n) + a ribonucleoside 5'-diphosphate. Involved in mRNA degradation. Catalyzes the phosphorolysis of single-stranded polyribonucleotides processively in the 3'- to 5'-direction. The chain is Polyribonucleotide nucleotidyltransferase from Nostoc sp. (strain PCC 7120 / SAG 25.82 / UTEX 2576).